The primary structure comprises 532 residues: Probable cyclic di-GMP phosphodiesterase PdeD (532 aa).

The next 2 helical transmembrane spans lie at 16–36 (MIVC…VRFI) and 245–265 (LPLA…ATAY). An EAL domain is found at 266-515 (RMSFSREINL…DFPKWLAGSQ (250 aa)).

It localises to the cell membrane. The catalysed reaction is 3',3'-c-di-GMP + H2O = 5'-phosphoguanylyl(3'-&gt;5')guanosine + H(+). Its function is as follows. Phosphodiesterase (PDE) that catalyzes the hydrolysis of cyclic-di-GMP (c-di-GMP) to 5'-pGpG. May serve as a negative regulator of cellulose synthesis (as has been suggested for S.typhimurium); overexpression inhibits cell aggregation in strains able to produce adhesive curli fimbriae. Cyclic-di-GMP is a second messenger which controls cell surface-associated traits in bacteria. The protein is Probable cyclic di-GMP phosphodiesterase PdeD of Escherichia coli (strain K12).